The sequence spans 241 residues: uncharacterized protein (241 aa).

Transmembrane regions (helical) follow at residues 7 to 27, 37 to 57, 72 to 92, 110 to 130, and 138 to 158; these read LIFL…WSVF, LFLL…LLLI, IIAL…SGFG, INLV…YVAF, and FGTL…IKII.

Its subcellular location is the cell membrane. This is an uncharacterized protein from Methanocaldococcus jannaschii (strain ATCC 43067 / DSM 2661 / JAL-1 / JCM 10045 / NBRC 100440) (Methanococcus jannaschii).